The sequence spans 872 residues: Alanine--tRNA ligase (872 aa).

H558, H562, C660, and H664 together coordinate Zn(2+).

This sequence belongs to the class-II aminoacyl-tRNA synthetase family. Zn(2+) serves as cofactor.

It is found in the cytoplasm. The enzyme catalyses tRNA(Ala) + L-alanine + ATP = L-alanyl-tRNA(Ala) + AMP + diphosphate. Functionally, catalyzes the attachment of alanine to tRNA(Ala) in a two-step reaction: alanine is first activated by ATP to form Ala-AMP and then transferred to the acceptor end of tRNA(Ala). Also edits incorrectly charged Ser-tRNA(Ala) and Gly-tRNA(Ala) via its editing domain. This is Alanine--tRNA ligase from Chlamydia pneumoniae (Chlamydophila pneumoniae).